The primary structure comprises 183 residues: Adenine phosphoribosyltransferase (183 aa).

It belongs to the purine/pyrimidine phosphoribosyltransferase family. Homodimer.

It localises to the cytoplasm. It catalyses the reaction AMP + diphosphate = 5-phospho-alpha-D-ribose 1-diphosphate + adenine. It functions in the pathway purine metabolism; AMP biosynthesis via salvage pathway; AMP from adenine: step 1/1. In terms of biological role, catalyzes a salvage reaction resulting in the formation of AMP, that is energically less costly than de novo synthesis. This chain is Adenine phosphoribosyltransferase, found in Proteus mirabilis (strain HI4320).